The primary structure comprises 279 residues: Beta-porphyranase E (279 aa).

The signal sequence occupies residues 1 to 18; it reads MGNTMLLTLLLVVVAAYG. In terms of domain architecture, GH16 spans 19–277; sequence QTPPPPEGFR…WVRSYTLLPV (259 aa). Residues W56, R60, E141, E146, and E243 each coordinate substrate. E141 functions as the Nucleophile in the catalytic mechanism. The active-site Proton donor is E146.

This sequence belongs to the glycosyl hydrolase 16 family.

Its subcellular location is the periplasm. It catalyses the reaction Hydrolysis of beta-D-galactopyranose-(1-&gt;4)-alpha-L-galactopyranose-6-sulfate linkages in porphyran.. In terms of biological role, cleaves the sulfated polysaccharide porphyran at the (1-&gt;4) linkages between beta-D-galactopyranose and alpha-L-galactopyranose-6-sulfate, forming mostly the disaccharide alpha-L-galactopyranose-6-sulfate-(1-&gt;3)-beta-D-galactose. The chain is Beta-porphyranase E (porE) from Zobellia galactanivorans (strain DSM 12802 / CCUG 47099 / CIP 106680 / NCIMB 13871 / Dsij).